An 882-amino-acid polypeptide reads, in one-letter code: Ion channel DMI1 (882 aa).

The segment at 1 to 122 is disordered; that stretch reads MAKSNEESSN…PSSSSITKQQ (122 aa). Residues 48-62 show a composition bias toward polar residues; the sequence is TSTTKTDFSEQQWNY. Positions 78–95 are enriched in pro residues; sequence PPPPPSKPPVNLIPPHPR. A compositionally biased stretch (low complexity) spans 107 to 117; that stretch reads SSLLPQPSSSS. A run of 4 helical transmembrane segments spans residues 129–149, 192–212, 255–275, and 307–327; these read SPIF…SAYL, TIAL…YKYL, LALL…LYAV, and IVSV…LGLV. RCK N-terminal domains follow at residues 348-489 and 608-757; these read RNHV…ETVV and PEKI…DKSI. The stretch at 378–403 forms a coiled coil; sequence VIVVLAEKEKEEMEMDIAKLEFDFMG.

The protein belongs to the castor/pollux (TC 1.A.1.23) family. Interacts (via c-terminus) with CNGC15A, CNGC15B and CNGC15C (via N-terminus). The Nod factor has no effect on these interactions, implying that the complex is maintained after activation. In terms of tissue distribution, mainly expressed in roots and nodules. Also detected in pods, flowers, leaves, and stems.

It localises to the nucleus membrane. Its function is as follows. Required for early signal transduction events leading to endosymbiosis. Acts early in a signal transduction chain leading from the perception of Nod factor to the activation of calcium spiking. Also involved in mycorrhizal symbiosis. May be involved in the regulation of the calcium channel responsible for calcium spiking by mobilizing another cation, and thereby altering the membrane potential. The chain is Ion channel DMI1 from Medicago truncatula (Barrel medic).